The sequence spans 246 residues: UDP-N-acetyl-D-mannosaminuronic acid transferase (246 aa).

Belongs to the glycosyltransferase 26 family.

It catalyses the reaction UDP-N-acetyl-alpha-D-mannosaminouronate + N-acetyl-alpha-D-glucosaminyl-di-trans,octa-cis-undecaprenyl diphosphate = beta-D-ManNAcA-(1-&gt;4)-alpha-D-GlcNAc-di-trans,octa-cis-undecaprenyl diphosphate + UDP + H(+). It participates in bacterial outer membrane biogenesis; enterobacterial common antigen biosynthesis. Its function is as follows. Catalyzes the synthesis of Und-PP-GlcNAc-ManNAcA (Lipid II), the second lipid-linked intermediate involved in enterobacterial common antigen (ECA) synthesis. The protein is UDP-N-acetyl-D-mannosaminuronic acid transferase of Escherichia coli O6:K15:H31 (strain 536 / UPEC).